A 380-amino-acid polypeptide reads, in one-letter code: MSHNPIRPWRNIERRKSRQVRVGNLMVGGDAPIAVQTMTNTPTEDAAATIAQILRCAEAGADIVRVSCPTEESTKAMREIVKASPVPLVADIHFHYKRGIEAADAGAACLRINPGNIGSHARVKEVVAAARANGCSMRIGVNGGSLERHLLEKYGEPCPDAMVESALDHARILDDLGFYDYKISVKASDMFLTVAAYHALAEATDAPLHLGITEAGGLRTGTVKSSIGMGALLWAGIGDTIRVSLSAEPEEEVKVGFEMLKSLGLRTRGVNIVACPSCARQGFDVIRTVETLEKRLAHISEPISLSIIGCVVNGPGEASLTDLGFTGGGKESGKMFVNGRADHNVANADMVEHIVKLVEDKAARLKAQRDAEEATEVPAE.

The [4Fe-4S] cluster site is built by C275, C278, C310, and E317.

Belongs to the IspG family. It depends on [4Fe-4S] cluster as a cofactor.

The enzyme catalyses (2E)-4-hydroxy-3-methylbut-2-enyl diphosphate + oxidized [flavodoxin] + H2O + 2 H(+) = 2-C-methyl-D-erythritol 2,4-cyclic diphosphate + reduced [flavodoxin]. It functions in the pathway isoprenoid biosynthesis; isopentenyl diphosphate biosynthesis via DXP pathway; isopentenyl diphosphate from 1-deoxy-D-xylulose 5-phosphate: step 5/6. Functionally, converts 2C-methyl-D-erythritol 2,4-cyclodiphosphate (ME-2,4cPP) into 1-hydroxy-2-methyl-2-(E)-butenyl 4-diphosphate. The polypeptide is 4-hydroxy-3-methylbut-2-en-1-yl diphosphate synthase (flavodoxin) (Hyphomonas neptunium (strain ATCC 15444)).